The sequence spans 1057 residues: Structural maintenance of chromosomes protein 6B (1057 aa).

The region spanning 22 to 1047 (ILRIKVENFM…ISMVKSHERI (1026 aa)) is the Zinc-hook domain. 49 to 56 (GQNGSGKS) serves as a coordination point for ATP. A coiled-coil region spans residues 135 to 448 (KVSNKRDELR…NDLKKHQTNK (314 aa)). The interval 449-632 (VTAFGGDRVI…PPLSRRPSRL (184 aa)) is flexible hinge. Residues 633 to 904 (CASFDDQIKD…QDHREKLMAC (272 aa)) adopt a coiled-coil conformation. Basic and acidic residues predominate over residues 818-828 (KNKRKESDQKA). A disordered region spans residues 818–845 (KNKRKESDQKASEICPESEIESLGPWDG).

The protein belongs to the SMC family. SMC6 subfamily. In terms of assembly, forms a heterodimer with SMC5. The SMC5-SMC6 complex is composed of the SMC5 and SMC6 heterodimer attached via their hinge domain and from the non-SMC subunit NSE4A or NSE4B. Expressed in seedlings, rosette leaves and floral buds.

The protein resides in the nucleus. The protein localises to the chromosome. Its function is as follows. Core component of the SMC5-SMC6 complex that promotes sister chromatid alignment after DNA damage and facilitates double-stranded DNA breaks (DSBs) repair via homologous recombination between sister chromatids. The chain is Structural maintenance of chromosomes protein 6B (SMC6B) from Arabidopsis thaliana (Mouse-ear cress).